A 390-amino-acid chain; its full sequence is Protein STRICTOSIDINE SYNTHASE-LIKE 3 (390 aa).

The N-terminal stretch at 1 to 25 (MAMSILAKIFLVFAIYCAIDPFSHS) is a signal peptide. N-linked (GlcNAc...) asparagine glycans are attached at residues N95 and N108.

It belongs to the strictosidine synthase family.

The protein resides in the vacuole. This chain is Protein STRICTOSIDINE SYNTHASE-LIKE 3, found in Arabidopsis thaliana (Mouse-ear cress).